The primary structure comprises 678 residues: Protein MALE DISCOVERER 2 (678 aa).

The first 25 residues, 1 to 25 (MMGCGFHFPWFFFLIIGLQAPLSLS), serve as a signal peptide directing secretion. At 26–323 (LTSQGSALLK…SKGSKHVWLY (298 aa)) the chain is on the extracellular side. Asparagine 52 carries N-linked (GlcNAc...) asparagine glycosylation. 4 LRR repeats span residues 71–94 (KVQI…SQLS), 95–117 (DLRS…YGSF), 119–141 (NLEV…LSNG), and 143–164 (SLKH…KIVR). The interval 247–314 (LAAEPAPSAP…KNQPQDNKQS (68 aa)) is disordered. Polar residues predominate over residues 296 to 311 (KGSTSPDISKNQPQDN). A helical membrane pass occupies residues 324–344 (VVIAVASFVGLLIIVAVIFFC). The Cytoplasmic portion of the chain corresponds to 345 to 678 (RKRAVKSIGP…ELEILSSEAT (334 aa)). Residues 346 to 651 (KRAVKSIGPW…DVAEQLKQVI (306 aa)) enclose the Protein kinase domain.

This sequence belongs to the protein kinase superfamily. Ser/Thr protein kinase family. In terms of tissue distribution, expressed in pollen tubes and seedlings.

It localises to the endomembrane system. The catalysed reaction is L-seryl-[protein] + ATP = O-phospho-L-seryl-[protein] + ADP + H(+). The enzyme catalyses L-threonyl-[protein] + ATP = O-phospho-L-threonyl-[protein] + ADP + H(+). Functionally, involved in the pollen tube perception of the female signal by binding an unidentified female attractant. May be involved in the regulation of root hairs development. In Arabidopsis thaliana (Mouse-ear cress), this protein is Protein MALE DISCOVERER 2 (MDIS2).